The chain runs to 147 residues: Acidic phospholipase A2 S7-48J (147 aa).

The N-terminal stretch at 1–19 is a signal peptide; sequence MYPAHLLVLLAVCVSLLGA. The propeptide occupies 20–27; sequence SDIPPQPL. 7 cysteine pairs are disulfide-bonded: Cys38–Cys99, Cys54–Cys146, Cys56–Cys72, Cys71–Cys127, Cys78–Cys120, Cys88–Cys113, and Cys106–Cys118. 3 residues coordinate Ca(2+): Tyr55, Gly57, and Gly59. His75 is a catalytic residue. Asp76 serves as a coordination point for Ca(2+). The active site involves Asp121.

It belongs to the phospholipase A2 family. Group I subfamily. D49 sub-subfamily. The cofactor is Ca(2+). Expressed by the venom gland.

The protein resides in the secreted. It carries out the reaction a 1,2-diacyl-sn-glycero-3-phosphocholine + H2O = a 1-acyl-sn-glycero-3-phosphocholine + a fatty acid + H(+). Functionally, snake venom phospholipase A2 (PLA2) that inhibits collagen-induced platelet aggregation. PLA2 catalyzes the calcium-dependent hydrolysis of the 2-acyl groups in 3-sn-phosphoglycerides. This chain is Acidic phospholipase A2 S7-48J, found in Austrelaps superbus (Lowland copperhead snake).